The primary structure comprises 552 residues: 5'-AMP-activated protein kinase catalytic subunit alpha-2 (552 aa).

Residues 16-268 form the Protein kinase domain; the sequence is YVLGDTLGVG…IKDIREHEWF (253 aa). ATP-binding positions include 22–30 and Lys-45; that span reads LGVGTFGKV. Asp-139 acts as the Proton acceptor in catalysis. A Phosphothreonine; by LKB1 and CaMKK2 modification is found at Thr-172. Phosphothreonine is present on Thr-258. Residues 291–376 are AIS; it reads EAVKEVCEKF…PERMPPLIAD (86 aa). Ser-377 and Ser-491 each carry phosphoserine.

It belongs to the protein kinase superfamily. CAMK Ser/Thr protein kinase family. SNF1 subfamily. In terms of assembly, AMPK is a heterotrimer of an alpha catalytic subunit (PRKAA1 or PRKAA2), a beta (PRKAB1 or PRKAB2) and a gamma non-catalytic subunits (PRKAG1, PRKAG2 or PRKAG3). Interacts with FNIP1 and FNIP2. Interacts with DUSP29. Interacts with ARF6. The phosphorylated form at Thr-172 mediated by CamKK2 interacts with ACSS2. It depends on Mg(2+) as a cofactor. Ubiquitinated. In terms of processing, phosphorylated at Thr-172 by STK11/LKB1 in complex with STE20-related adapter-alpha (STRADA) pseudo kinase and CAB39. Also phosphorylated at Thr-172 by CAMKK2; triggered by a rise in intracellular calcium ions, without detectable changes in the AMP/ATP ratio. CAMKK1 can also phosphorylate Thr-172, but at much lower level. Dephosphorylated by protein phosphatase 2A and 2C (PP2A and PP2C). Phosphorylated by ULK1; leading to negatively regulate AMPK activity and suggesting the existence of a regulatory feedback loop between ULK1 and AMPK. Dephosphorylated by PPM1A and PPM1B at Thr-172 (mediated by STK11/LKB1).

Its subcellular location is the cytoplasm. The protein resides in the nucleus. The catalysed reaction is L-seryl-[protein] + ATP = O-phospho-L-seryl-[protein] + ADP + H(+). The enzyme catalyses L-threonyl-[protein] + ATP = O-phospho-L-threonyl-[protein] + ADP + H(+). It catalyses the reaction L-seryl-[acetyl-CoA carboxylase] + ATP = O-phospho-L-seryl-[acetyl-CoA carboxylase] + ADP + H(+). It carries out the reaction L-seryl-[3-hydroxy-3-methylglutaryl-coenzyme A reductase] + ATP = O-phospho-L-seryl-[3-hydroxy-3-methylglutaryl-coenzyme A reductase] + ADP + H(+). Activated by phosphorylation on Thr-172. Binding of AMP to non-catalytic gamma subunit (PRKAG1, PRKAG2 or PRKAG3) results in allosteric activation, inducing phosphorylation on Thr-172. AMP-binding to gamma subunit also sustains activity by preventing dephosphorylation of Thr-172. ADP also stimulates Thr-172 phosphorylation, without stimulating already phosphorylated AMPK. ATP promotes dephosphorylation of Thr-172, rendering the enzyme inactive. Under physiological conditions AMPK mainly exists in its inactive form in complex with ATP, which is much more abundant than AMP. Selectively inhibited by compound C (6-[4-(2-Piperidin-1-yl-ethoxy)-phenyl)]-3-pyridin-4-yl-pyyrazolo[1,5-a] pyrimidine. Activated by resveratrol, a natural polyphenol present in red wine, and S17834, a synthetic polyphenol. Salicylate/aspirin directly activates kinase activity, primarily by inhibiting Thr-172 dephosphorylation. Catalytic subunit of AMP-activated protein kinase (AMPK), an energy sensor protein kinase that plays a key role in regulating cellular energy metabolism. In response to reduction of intracellular ATP levels, AMPK activates energy-producing pathways and inhibits energy-consuming processes: inhibits protein, carbohydrate and lipid biosynthesis, as well as cell growth and proliferation. AMPK acts via direct phosphorylation of metabolic enzymes, and by longer-term effects via phosphorylation of transcription regulators. Regulates lipid synthesis by phosphorylating and inactivating lipid metabolic enzymes such as ACACA, ACACB, GYS1, HMGCR and LIPE; regulates fatty acid and cholesterol synthesis by phosphorylating acetyl-CoA carboxylase (ACACA and ACACB) and hormone-sensitive lipase (LIPE) enzymes, respectively. Promotes lipolysis of lipid droplets by mediating phosphorylation of isoform 1 of CHKA (CHKalpha2). Regulates insulin-signaling and glycolysis by phosphorylating IRS1, PFKFB2 and PFKFB3. Involved in insulin receptor/INSR internalization. AMPK stimulates glucose uptake in muscle by increasing the translocation of the glucose transporter SLC2A4/GLUT4 to the plasma membrane, possibly by mediating phosphorylation of TBC1D4/AS160. Regulates transcription and chromatin structure by phosphorylating transcription regulators involved in energy metabolism such as CRTC2/TORC2, FOXO3, histone H2B, HDAC5, MEF2C, MLXIPL/ChREBP, EP300, HNF4A, p53/TP53, SREBF1, SREBF2 and PPARGC1A. Acts as a key regulator of glucose homeostasis in liver by phosphorylating CRTC2/TORC2, leading to CRTC2/TORC2 sequestration in the cytoplasm. In response to stress, phosphorylates 'Ser-36' of histone H2B (H2BS36ph), leading to promote transcription. Acts as a key regulator of cell growth and proliferation by phosphorylating FNIP1, TSC2, RPTOR, WDR24 and ATG1/ULK1: in response to nutrient limitation, negatively regulates the mTORC1 complex by phosphorylating RPTOR component of the mTORC1 complex and by phosphorylating and activating TSC2. Also phosphorylates and inhibits GATOR2 subunit WDR24 in response to nutrient limitation, leading to suppress glucose-mediated mTORC1 activation. In response to energetic stress, phosphorylates FNIP1, inactivating the non-canonical mTORC1 signaling, thereby promoting nuclear translocation of TFEB and TFE3, and inducing transcription of lysosomal or autophagy genes. In response to nutrient limitation, promotes autophagy by phosphorylating and activating ATG1/ULK1. In that process, it also activates WDR45/WIPI4. Phosphorylates CASP6, thereby preventing its autoprocessing and subsequent activation. AMPK also acts as a regulator of circadian rhythm by mediating phosphorylation of CRY1, leading to destabilize it. May regulate the Wnt signaling pathway by phosphorylating CTNNB1, leading to stabilize it. Also acts as a regulator of cellular polarity by remodeling the actin cytoskeleton; probably by indirectly activating myosin. Also phosphorylates CFTR, EEF2K, KLC1, NOS3 and SLC12A1. Plays an important role in the differential regulation of pro-autophagy (composed of PIK3C3, BECN1, PIK3R4 and UVRAG or ATG14) and non-autophagy (composed of PIK3C3, BECN1 and PIK3R4) complexes, in response to glucose starvation. Can inhibit the non-autophagy complex by phosphorylating PIK3C3 and can activate the pro-autophagy complex by phosphorylating BECN1. Upon glucose starvation, promotes ARF6 activation in a kinase-independent manner leading to cell migration. Upon glucose deprivation mediates the phosphorylation of ACSS2 at 'Ser-659', which exposes the nuclear localization signal of ACSS2, required for its interaction with KPNA1 and nuclear translocation. Upon stress, regulates mitochondrial fragmentation through phosphorylation of MTFR1L. The polypeptide is 5'-AMP-activated protein kinase catalytic subunit alpha-2 (Mus musculus (Mouse)).